Consider the following 218-residue polypeptide: MSESQNRPKSPLARRFRGFLPVVVDVETAGFNSKTDALLEVSAVIISMEDDGMLYPEPPVSFNVEPFAGANIEQAALEFTGIDPFNPLRDAKPEADALNELFRPIRKSVKSNGCNRAILVGHNATFDHSFLFAAAERGDVKRNPFHPFSTFDTATLAALAYGHTVLSRACQLAGIPFDNKEAHSAEYDAMKTAELFCSIVNRWKELGGWTTDQQDYAD.

One can recognise an Exonuclease domain in the interval 22 to 196 (VVVDVETAGF…YDAMKTAELF (175 aa)). Positions 25, 27, 183, and 188 each coordinate Mg(2+). His-183 serves as the catalytic Proton donor/acceptor.

The protein belongs to the RNase T family. As to quaternary structure, homodimer. The cofactor is Mg(2+).

Trims short 3' overhangs of a variety of RNA species, leaving a one or two nucleotide 3' overhang. Responsible for the end-turnover of tRNA: specifically removes the terminal AMP residue from uncharged tRNA (tRNA-C-C-A). Also appears to be involved in tRNA biosynthesis. This Hahella chejuensis (strain KCTC 2396) protein is Ribonuclease T.